Reading from the N-terminus, the 252-residue chain is Outer kinetochore KNL1 complex subunit ZWINT (252 aa).

A disordered region spans residues 80–99 (QSPDALASEDASRQKATETK). Basic and acidic residues predominate over residues 89–99 (DASRQKATETK). The stretch at 120–221 (LSEALPQVKE…QRNQSYLQLL (102 aa)) forms a coiled coil. Ser216 and Ser249 each carry phosphoserine.

In terms of assembly, component of the KNL1 complex composed of KNL1 and ZWINT. Part of the ten-subunit outer kinetochore KMN network that includes the KNL1, MIS12 and NDC80 complexes; a bioriented kinetochore contains approximately 150 copies of the network. Interacts with the MIS12 complex subunits MIS12 DSN1, and PMF1. Interacts with the NDC80 complex subunit NDC80 during mitosis. Interacts with ZW10. Interacts with CETN3.

Its subcellular location is the nucleus. The protein localises to the chromosome. It is found in the centromere. It localises to the kinetochore. Its function is as follows. Acts as a component of the outer kinetochore KNL1 complex that serves as a docking point for spindle assembly checkpoint components and mediates microtubule-kinetochore interactions. Kinetochores, consisting of a centromere-associated inner segment and a microtubule-contacting outer segment, play a crucial role in chromosome segregation by mediating the physical connection between centromeric DNA and spindle microtubules. The outer kinetochore is made up of the ten-subunit KMN network, comprising the MIS12, NDC80 and KNL1 complexes, and auxiliary microtubule-associated components; together they connect the outer kinetochore with the inner kinetochore, bind microtubules, and mediate interactions with mitotic checkpoint proteins that delay anaphase until chromosomes are bioriented on the spindle. Targets the RZZ complex to the kinetochore at prometaphase. Recruits MAD2L1 to the kinetochore, but is not required for BUB1B localization. In addition to orienting mitotic chromosomes, it is also essential for alignment of homologous chromosomes during meiotic metaphase I. In meiosis I, required to activate the spindle assembly checkpoint at unattached kinetochores to correct erroneous kinetochore-microtubule attachments. The protein is Outer kinetochore KNL1 complex subunit ZWINT (Zwint) of Mus musculus (Mouse).